We begin with the raw amino-acid sequence, 212 residues long: Pyridoxine/pyridoxamine 5'-phosphate oxidase (212 aa).

Residues 8–11 and Lys66 contribute to the substrate site; that span reads RREY. Residues 61–66, 76–77, Arg82, Lys83, and Gln105 contribute to the FMN site; these read RIVLLK and FT. Residues Tyr123, Arg127, and Ser131 each coordinate substrate. FMN is bound by residues 140–141 and Trp185; that span reads QS. 191–193 provides a ligand contact to substrate; sequence RLH. Arg195 lines the FMN pocket.

The protein belongs to the pyridoxamine 5'-phosphate oxidase family. In terms of assembly, homodimer. The cofactor is FMN.

The catalysed reaction is pyridoxamine 5'-phosphate + O2 + H2O = pyridoxal 5'-phosphate + H2O2 + NH4(+). The enzyme catalyses pyridoxine 5'-phosphate + O2 = pyridoxal 5'-phosphate + H2O2. It participates in cofactor metabolism; pyridoxal 5'-phosphate salvage; pyridoxal 5'-phosphate from pyridoxamine 5'-phosphate: step 1/1. Its pathway is cofactor metabolism; pyridoxal 5'-phosphate salvage; pyridoxal 5'-phosphate from pyridoxine 5'-phosphate: step 1/1. Catalyzes the oxidation of either pyridoxine 5'-phosphate (PNP) or pyridoxamine 5'-phosphate (PMP) into pyridoxal 5'-phosphate (PLP). The polypeptide is Pyridoxine/pyridoxamine 5'-phosphate oxidase (Shewanella amazonensis (strain ATCC BAA-1098 / SB2B)).